The sequence spans 808 residues: Probable E3 ubiquitin-protein ligase MARCHF10 (808 aa).

Disordered regions lie at residues 33–81 (LRRQ…LTEP), 101–268 (QTSV…RKAS), and 284–415 (SRRE…EVGV). Over residues 34 to 49 (RRQEYRRDPNEKKRDQ) the composition is skewed to basic and acidic residues. The span at 237 to 249 (QAFQGKNSPQVLS) shows a compositional bias: polar residues. 2 stretches are compositionally biased toward basic and acidic residues: residues 330–349 (KNFE…RSEP) and 379–397 (LPDR…ENAK). The RING-CH-type zinc-finger motif lies at 651 to 721 (DSEEEGDLCR…EMCKQGLLVD (71 aa)). Residues Cys659, Cys662, Cys677, Cys679, His687, Cys690, Cys711, and Cys714 each coordinate Zn(2+). The segment at 773 to 808 (ERERLSRNYPQPRTEENENSELGDGNEGSISQSQVV) is disordered.

The catalysed reaction is S-ubiquitinyl-[E2 ubiquitin-conjugating enzyme]-L-cysteine + [acceptor protein]-L-lysine = [E2 ubiquitin-conjugating enzyme]-L-cysteine + N(6)-ubiquitinyl-[acceptor protein]-L-lysine.. It functions in the pathway protein modification; protein ubiquitination. Functionally, E3 ubiquitin-protein ligase. E3 ubiquitin ligases accept ubiquitin from an E2 ubiquitin-conjugating enzyme in the form of a thioester and then directly transfer the ubiquitin to targeted substrates. The chain is Probable E3 ubiquitin-protein ligase MARCHF10 from Homo sapiens (Human).